A 122-amino-acid chain; its full sequence is Large ribosomal subunit protein uL14 (122 aa).

Belongs to the universal ribosomal protein uL14 family. Part of the 50S ribosomal subunit. Forms a cluster with proteins L3 and L19. In the 70S ribosome, L14 and L19 interact and together make contacts with the 16S rRNA in bridges B5 and B8.

In terms of biological role, binds to 23S rRNA. Forms part of two intersubunit bridges in the 70S ribosome. In Dechloromonas aromatica (strain RCB), this protein is Large ribosomal subunit protein uL14.